Reading from the N-terminus, the 328-residue chain is Phosphate acyltransferase (328 aa).

The protein belongs to the PlsX family. Homodimer. Probably interacts with PlsY.

The protein resides in the cytoplasm. It carries out the reaction a fatty acyl-[ACP] + phosphate = an acyl phosphate + holo-[ACP]. Its pathway is lipid metabolism; phospholipid metabolism. Functionally, catalyzes the reversible formation of acyl-phosphate (acyl-PO(4)) from acyl-[acyl-carrier-protein] (acyl-ACP). This enzyme utilizes acyl-ACP as fatty acyl donor, but not acyl-CoA. The chain is Phosphate acyltransferase from Staphylococcus saprophyticus subsp. saprophyticus (strain ATCC 15305 / DSM 20229 / NCIMB 8711 / NCTC 7292 / S-41).